The primary structure comprises 495 residues: Ubiquinone biosynthesis monooxygenase COQ6, mitochondrial (495 aa).

The protein belongs to the UbiH/COQ6 family. As to quaternary structure, component of a multi-subunit COQ enzyme complex. Requires FAD as cofactor.

The protein localises to the mitochondrion inner membrane. It carries out the reaction a 4-hydroxy-3-(all-trans-polyprenyl)benzoate + 2 reduced [2Fe-2S]-[ferredoxin] + O2 + 2 H(+) = a 3,4-dihydroxy-5-(all-trans-polyprenyl)benzoate + 2 oxidized [2Fe-2S]-[ferredoxin] + H2O. The enzyme catalyses a 2-methoxy-6-(all-trans-polyprenyl)phenol + 2 reduced [2Fe-2S]-[ferredoxin] + O2 + 2 H(+) = a 2-methoxy-6-(all-trans-polyprenyl)benzene-1,4-diol + 2 oxidized [2Fe-2S]-[ferredoxin] + H2O. It participates in cofactor biosynthesis; ubiquinone biosynthesis. Functionally, FAD-dependent monooxygenase required for two non-consecutive steps during ubiquinone biosynthesis. Required for the C5-ring hydroxylation during ubiquinone biosynthesis by catalyzing the hydroxylation of 4-hydroxy-3-(all-trans-polyprenyl)benzoic acid to 3,4-dihydroxy-5-(all-trans-polyprenyl)benzoic acid. Also acts downstream of coq4, for the C1-hydroxylation during ubiquinone biosynthesis by catalyzing the hydroxylation of 2-methoxy-6-(all-trans-polyprenyl)phenol to 2-methoxy-6-(all-trans-polyprenyl)benzene-1,4-diol. The electrons required for the hydroxylation reaction are funneled indirectly to coq6 from NADPH via a ferredoxin/ferredoxin reductase system. This Dictyostelium discoideum (Social amoeba) protein is Ubiquinone biosynthesis monooxygenase COQ6, mitochondrial.